The sequence spans 545 residues: Cytosolic Fe-S cluster assembly factor NAR1 (545 aa).

The [4Fe-4S] cluster site is built by Cys-20, Cys-74, Cys-77, Cys-80, Cys-188, Cys-243, Cys-454, and Cys-458.

It belongs to the NARF family.

Its function is as follows. Component of the cytosolic Fe/S protein assembly machinery. Required for maturation of extramitochondrial Fe/S proteins. May play a role in the transfer of pre-assembled Fe/S clusters to target apoproteins. This Scheffersomyces stipitis (strain ATCC 58785 / CBS 6054 / NBRC 10063 / NRRL Y-11545) (Yeast) protein is Cytosolic Fe-S cluster assembly factor NAR1 (NAR1).